Consider the following 186-residue polypeptide: UPF0301 protein APL_0232 (186 aa).

Belongs to the UPF0301 (AlgH) family.

This Actinobacillus pleuropneumoniae serotype 5b (strain L20) protein is UPF0301 protein APL_0232.